Here is a 546-residue protein sequence, read N- to C-terminus: Histidine--tRNA ligase, mitochondrial (546 aa).

A mitochondrion-targeting transit peptide spans 1 to 20 (MLSRSLNKVVTSIKSSSIIR). L-histidine-binding positions include 129-131 (DLT), arginine 156, glutamine 172, aspartate 176, arginine 326, and 330-331 (YY).

Belongs to the class-II aminoacyl-tRNA synthetase family.

The protein localises to the cytoplasm. It is found in the mitochondrion. It catalyses the reaction tRNA(His) + L-histidine + ATP = L-histidyl-tRNA(His) + AMP + diphosphate + H(+). Catalyzes the aminoacylation of histidyl-tRNA in both the cytoplasm and the mitochondrion. The chain is Histidine--tRNA ligase, mitochondrial (HTS1) from Saccharomyces cerevisiae (strain ATCC 204508 / S288c) (Baker's yeast).